Reading from the N-terminus, the 510-residue chain is Portal protein (510 aa).

It belongs to the podoviridae head-to-tail connector protein family. As to quaternary structure, homododecamer.

Its subcellular location is the virion. Forms the portal vertex of the capsid. This portal plays critical roles in head assembly, genome packaging, neck/tail attachment, and genome ejection. The portal protein multimerizes as a single ring-shaped homododecamer arranged around a central channel. In Pseudomonas phage phiKMV, this protein is Portal protein.